Reading from the N-terminus, the 203-residue chain is Peptidyl-tRNA hydrolase (203 aa).

Residue Y14 coordinates tRNA. H19 functions as the Proton acceptor in the catalytic mechanism. TRNA contacts are provided by Y64, N66, and N112.

The protein belongs to the PTH family. In terms of assembly, monomer.

It localises to the cytoplasm. The enzyme catalyses an N-acyl-L-alpha-aminoacyl-tRNA + H2O = an N-acyl-L-amino acid + a tRNA + H(+). Hydrolyzes ribosome-free peptidyl-tRNAs (with 1 or more amino acids incorporated), which drop off the ribosome during protein synthesis, or as a result of ribosome stalling. Functionally, catalyzes the release of premature peptidyl moieties from peptidyl-tRNA molecules trapped in stalled 50S ribosomal subunits, and thus maintains levels of free tRNAs and 50S ribosomes. This chain is Peptidyl-tRNA hydrolase, found in Methylobacterium nodulans (strain LMG 21967 / CNCM I-2342 / ORS 2060).